A 1584-amino-acid chain; its full sequence is Cilia- and flagella-associated protein 74 (1584 aa).

Residues 300–379 (RKFQAWDRAK…EAEEEKRKKQ (80 aa)) are a coiled coil. Over residues 692–706 (SEQQLEGTESSQADM) the composition is skewed to polar residues. Residues 692–739 (SEQQLEGTESSQADMQSRKELEKLDKEQEEEQPAEPERLTTVIPPSEE) form a disordered region. Over residues 707–717 (QSRKELEKLDK) the composition is skewed to basic and acidic residues.

It belongs to the CFAP74 family.

The protein resides in the cytoplasm. It is found in the cytoskeleton. The protein localises to the cilium axoneme. It localises to the flagellum axoneme. In terms of biological role, as part of the central apparatus of the cilium axoneme may play a role in cilium movement. May play an important role in sperm architecture and function. In Homo sapiens (Human), this protein is Cilia- and flagella-associated protein 74.